Consider the following 182-residue polypeptide: Transcription termination/antitermination protein NusG (182 aa).

In terms of domain architecture, KOW spans Val-131 to Val-163.

This sequence belongs to the NusG family.

Functionally, participates in transcription elongation, termination and antitermination. In Staphylococcus carnosus (strain TM300), this protein is Transcription termination/antitermination protein NusG.